Here is a 244-residue protein sequence, read N- to C-terminus: Tetraspanin-2A (244 aa).

At 1 to 22 (MGIGYGASDEQLEKQIGCVKYT) the chain is on the cytoplasmic side. Residues 23 to 43 (LFCFNIVAWMISTALFALTVW) form a helical membrane-spanning segment. The Extracellular portion of the chain corresponds to 44–61 (LRAEPGFNDWLRILEAQS). The helical transmembrane segment at 62 to 82 (FYIGVYVLIGISIVMMAVSFL) threads the bilayer. The Cytoplasmic portion of the chain corresponds to 83-91 (GCLSALMEN). Residues 92 to 112 (TLALFVFVGTQVFGFIAIVAG) form a helical membrane-spanning segment. At 113–206 (SAVLLQFSTI…TWFFEGKTGW (94 aa)) the chain is on the extracellular side. The chain crosses the membrane as a helical span at residues 207–227 (IVALAMTLGLLNVICAVMSFV). At 228–244 (LVQAVKKEEEQASNYRR) the chain is on the cytoplasmic side.

This sequence belongs to the tetraspanin (TM4SF) family. In terms of assembly, forms a complex with Ssk and mesh.

It localises to the apicolateral cell membrane. The protein localises to the cell junction. Its subcellular location is the septate junction. In terms of biological role, required for assembly of smooth septate junctions (sSJs), together with Ssk and mesh. Important for barrier function of the midgut epithelium. The chain is Tetraspanin-2A from Drosophila melanogaster (Fruit fly).